A 116-amino-acid polypeptide reads, in one-letter code: HVA22-like protein e (116 aa).

Transmembrane regions (helical) follow at residues 12-32 (HSLAGPVVMLLYPLYASVIAI), 42-62 (QWLAYWILYSFLTLSELILQS), and 63-83 (LLEWIPIWYTAKLVFVAWLVL).

The protein belongs to the DP1 family. Predominantly expressed in stem.

The protein resides in the membrane. The protein is HVA22-like protein e (HVA22E) of Arabidopsis thaliana (Mouse-ear cress).